The chain runs to 439 residues: MSTIFALCTPWGKSGVAVIRVSGQDAVKTFMHFKISNAIKPRVATFTPLYNAAHEVIDEVIVVYFSAPNSFTGEDVVELHTHGSIAVIRMILCELGKIFIPAGPGEFSLRAFLNNKVDLTRAEAIVDLINAETEMQAKQAIRQMSGSLEKLYQSWRQQLIDVLSNMEAYIDFPEEVTSFAVENISFLLDKIKESLENHLNDGRKGEILRQGIYVAILGEPNSGKSTLFNHLAKRDIAIVSEYAGTTRDVLETHIDIAGYPIVIIDTAGIRDSNDPVEQEGIRRAKLKAESADFKIIMLPYEKKDALNNEIIDLIDDRSICVLSKSDSIITQNLININDINFIPVSVCCNLGIEHLLSAIQKKVEADFKFCSTSPFITSDRQRVHIQNAVNILKNISFELPMELISEDLRLSVRELEKVVGVISNEEILDNVFGKFCIGK.

Residues arginine 20, glutamate 78, and lysine 116 each contribute to the (6S)-5-formyl-5,6,7,8-tetrahydrofolate site. Residues 211 to 364 (GIYVAILGEP…LLSAIQKKVE (154 aa)) enclose the TrmE-type G domain. Residues 221–226 (NSGKST), 240–246 (SEYAGTT), and 265–268 (DTAG) each bind GTP. Mg(2+)-binding residues include serine 225 and threonine 246. Lysine 439 provides a ligand contact to (6S)-5-formyl-5,6,7,8-tetrahydrofolate.

The protein belongs to the TRAFAC class TrmE-Era-EngA-EngB-Septin-like GTPase superfamily. TrmE GTPase family. As to quaternary structure, homodimer. Heterotetramer of two MnmE and two MnmG subunits. K(+) is required as a cofactor.

It is found in the cytoplasm. In terms of biological role, exhibits a very high intrinsic GTPase hydrolysis rate. Involved in the addition of a carboxymethylaminomethyl (cmnm) group at the wobble position (U34) of certain tRNAs, forming tRNA-cmnm(5)s(2)U34. The sequence is that of tRNA modification GTPase MnmE from Ehrlichia ruminantium (strain Gardel).